Reading from the N-terminus, the 295-residue chain is 4-diphosphocytidyl-2-C-methyl-D-erythritol kinase (295 aa).

Lys-15 is an active-site residue. An ATP-binding site is contributed by 102-112 (PIASGVGGGSS). The active site involves Asp-144.

Belongs to the GHMP kinase family. IspE subfamily.

The enzyme catalyses 4-CDP-2-C-methyl-D-erythritol + ATP = 4-CDP-2-C-methyl-D-erythritol 2-phosphate + ADP + H(+). It participates in isoprenoid biosynthesis; isopentenyl diphosphate biosynthesis via DXP pathway; isopentenyl diphosphate from 1-deoxy-D-xylulose 5-phosphate: step 3/6. Functionally, catalyzes the phosphorylation of the position 2 hydroxy group of 4-diphosphocytidyl-2C-methyl-D-erythritol. This Mesorhizobium japonicum (strain LMG 29417 / CECT 9101 / MAFF 303099) (Mesorhizobium loti (strain MAFF 303099)) protein is 4-diphosphocytidyl-2-C-methyl-D-erythritol kinase.